Consider the following 402-residue polypeptide: Arginine biosynthesis bifunctional protein ArgJ (402 aa).

Substrate contacts are provided by threonine 152, lysine 178, threonine 189, glutamate 275, asparagine 397, and threonine 402. Residue threonine 189 is the Nucleophile of the active site.

This sequence belongs to the ArgJ family. Heterotetramer of two alpha and two beta chains.

The protein resides in the cytoplasm. The catalysed reaction is N(2)-acetyl-L-ornithine + L-glutamate = N-acetyl-L-glutamate + L-ornithine. It catalyses the reaction L-glutamate + acetyl-CoA = N-acetyl-L-glutamate + CoA + H(+). The protein operates within amino-acid biosynthesis; L-arginine biosynthesis; L-ornithine and N-acetyl-L-glutamate from L-glutamate and N(2)-acetyl-L-ornithine (cyclic): step 1/1. It functions in the pathway amino-acid biosynthesis; L-arginine biosynthesis; N(2)-acetyl-L-ornithine from L-glutamate: step 1/4. Functionally, catalyzes two activities which are involved in the cyclic version of arginine biosynthesis: the synthesis of N-acetylglutamate from glutamate and acetyl-CoA as the acetyl donor, and of ornithine by transacetylation between N(2)-acetylornithine and glutamate. This chain is Arginine biosynthesis bifunctional protein ArgJ, found in Symbiobacterium thermophilum (strain DSM 24528 / JCM 14929 / IAM 14863 / T).